The following is a 494-amino-acid chain: 4-trimethylaminobutyraldehyde dehydrogenase (494 aa).

S2 carries the N-acetylserine modification. K30 is modified (N6-acetyllysine; alternate). K30 carries the post-translational modification N6-succinyllysine; alternate. K59 is modified (N6-succinyllysine). NAD(+) is bound by residues K180 and 232–236 (GSVPT). The active-site Proton acceptor is E254. C288 acts as the Nucleophile in catalysis. N6-acetyllysine is present on residues K298 and K344. E391 provides a ligand contact to NAD(+).

This sequence belongs to the aldehyde dehydrogenase family. As to quaternary structure, homotetramer.

It localises to the cytoplasm. The protein localises to the cytosol. The catalysed reaction is 4-(trimethylamino)butanal + NAD(+) + H2O = 4-(trimethylamino)butanoate + NADH + 2 H(+). The enzyme catalyses an aldehyde + NAD(+) + H2O = a carboxylate + NADH + 2 H(+). It catalyses the reaction 4-aminobutanal + NAD(+) + H2O = 4-aminobutanoate + NADH + 2 H(+). It carries out the reaction formaldehyde + NAD(+) + H2O = formate + NADH + 2 H(+). The catalysed reaction is acetaldehyde + NAD(+) + H2O = acetate + NADH + 2 H(+). The enzyme catalyses imidazole-4-acetaldehyde + NAD(+) + H2O = imidazole-4-acetate + NADH + 2 H(+). It catalyses the reaction acrolein + NAD(+) + H2O = acrylate + NADH + 2 H(+). It carries out the reaction (5-hydroxyindol-3-yl)acetaldehyde + NAD(+) + H2O = (5-hydroxyindol-3-yl)acetate + NADH + 2 H(+). The catalysed reaction is 3,4-dihydroxyphenylacetaldehyde + NAD(+) + H2O = 3,4-dihydroxyphenylacetate + NADH + 2 H(+). The enzyme catalyses spermine monoaldehyde + NAD(+) + H2O = N-(2-carboxyethyl)spermidine + NADH + 2 H(+). It catalyses the reaction propanal + NAD(+) + H2O = propanoate + NADH + 2 H(+). It carries out the reaction butanal + NAD(+) + H2O = butanoate + NADH + 2 H(+). The catalysed reaction is pentanal + NAD(+) + H2O = pentanoate + NADH + 2 H(+). The enzyme catalyses hexanal + NAD(+) + H2O = hexanoate + NADH + 2 H(+). Its pathway is amine and polyamine biosynthesis; carnitine biosynthesis. In terms of biological role, converts gamma-trimethylaminobutyraldehyde into gamma-butyrobetaine with high efficiency (in vitro). Can catalyze the irreversible oxidation of a broad range of aldehydes to the corresponding acids in an NAD-dependent reaction, but with low efficiency. Catalyzes the oxidation of aldehydes arising from biogenic amines and polyamines. This is 4-trimethylaminobutyraldehyde dehydrogenase (ALDH9A1) from Bos taurus (Bovine).